A 145-amino-acid chain; its full sequence is Basic phospholipase A2 Vb-2 (145 aa).

The N-terminal stretch at 1–19 (MNPAHLLVLLAVCVSLLGA) is a signal peptide. The propeptide occupies 20-27 (ANIPPQPL). 7 disulfides stabilise this stretch: C38–C97, C52–C144, C54–C70, C69–C125, C76–C118, C86–C111, and C104–C116. 3 residues coordinate Ca(2+): Y53, G55, and G57. H73 is a catalytic residue. D74 contributes to the Ca(2+) binding site. D119 is a catalytic residue.

The cofactor is Ca(2+). As to expression, expressed by the venom gland.

It localises to the secreted. It catalyses the reaction a 1,2-diacyl-sn-glycero-3-phosphocholine + H2O = a 1-acyl-sn-glycero-3-phosphocholine + a fatty acid + H(+). Its function is as follows. Snake venom phospholipase A2 (PLA2) that has only a weak enzymatic activity. Inhibits neuromuscular transmission by blocking acetylcholine release from the nerve termini. PLA2 catalyzes the calcium-dependent hydrolysis of the 2-acyl groups in 3-sn-phosphoglycerides. In Bungarus fasciatus (Banded krait), this protein is Basic phospholipase A2 Vb-2.